The sequence spans 160 residues: Transcription antitermination protein NusB (160 aa).

Belongs to the NusB family.

Involved in transcription antitermination. Required for transcription of ribosomal RNA (rRNA) genes. Binds specifically to the boxA antiterminator sequence of the ribosomal RNA (rrn) operons. This Sinorhizobium medicae (strain WSM419) (Ensifer medicae) protein is Transcription antitermination protein NusB.